The primary structure comprises 298 residues: Acetyl-coenzyme A carboxylase carboxyl transferase subunit beta (298 aa).

The 271-residue stretch at 25 to 295 folds into the CoA carboxyltransferase N-terminal domain; that stretch reads VWAKCANCGE…SADHREHVVA (271 aa). Cysteine 29, cysteine 32, cysteine 48, and cysteine 51 together coordinate Zn(2+). The segment at 29–51 adopts a C4-type zinc-finger fold; the sequence is CANCGELTYQKQFNDALKVCPKC.

The protein belongs to the AccD/PCCB family. Acetyl-CoA carboxylase is a heterohexamer composed of biotin carboxyl carrier protein (AccB), biotin carboxylase (AccC) and two subunits each of ACCase subunit alpha (AccA) and ACCase subunit beta (AccD). Zn(2+) is required as a cofactor.

Its subcellular location is the cytoplasm. It catalyses the reaction N(6)-carboxybiotinyl-L-lysyl-[protein] + acetyl-CoA = N(6)-biotinyl-L-lysyl-[protein] + malonyl-CoA. Its pathway is lipid metabolism; malonyl-CoA biosynthesis; malonyl-CoA from acetyl-CoA: step 1/1. Component of the acetyl coenzyme A carboxylase (ACC) complex. Biotin carboxylase (BC) catalyzes the carboxylation of biotin on its carrier protein (BCCP) and then the CO(2) group is transferred by the transcarboxylase to acetyl-CoA to form malonyl-CoA. The sequence is that of Acetyl-coenzyme A carboxylase carboxyl transferase subunit beta from Herpetosiphon aurantiacus (strain ATCC 23779 / DSM 785 / 114-95).